A 373-amino-acid chain; its full sequence is Mannan endo-1,4-beta-mannosidase A (373 aa).

The first 17 residues, 1 to 17 (MKGLFAFGLGLLSLVNA), serve as a signal peptide directing secretion. Substrate is bound by residues tryptophan 81, asparagine 193, and 194–196 (EPR). The active-site Proton donor/acceptor is glutamate 194. A disulfide bond links cysteine 197 and cysteine 200. Substrate-binding residues include glutamate 230, tyrosine 267, and tryptophan 271. An intrachain disulfide couples cysteine 289 to cysteine 296. Glutamate 300 functions as the Nucleophile in the catalytic mechanism. The cysteines at positions 308 and 359 are disulfide-linked. Substrate is bound at residue tryptophan 332.

Belongs to the glycosyl hydrolase 5 (cellulase A) family. Monomer. Not glycosylated.

It is found in the secreted. The catalysed reaction is Random hydrolysis of (1-&gt;4)-beta-D-mannosidic linkages in mannans, galactomannans and glucomannans.. Endo-1,4-mannanase that catalyzes the random hydrolysis of (1-&gt;4)-beta-D-mannosidic linkages in mannans and heteromannans. It is a crucial enzyme for depolymerization of seed galactomannans and wood galactoglucomannans. Hydrolyzes structurally different mannan polysaccharides, such as galactomannans, glucomannans, and beta-1,4-mannans from different sources, yielding principally mannobiose. Also has transglycosylation activity. The chain is Mannan endo-1,4-beta-mannosidase A from Podospora anserina (strain S / ATCC MYA-4624 / DSM 980 / FGSC 10383) (Pleurage anserina).